The chain runs to 302 residues: MAENVQDIKRRIKSVNSTMQITHAMELVASAKLRKSRELAEGRRPYFEAMIESIGRIVEKSGNARNIFMDQREVKKTAYIIITGDKGLAGGYNVNVAKLVEEHITDKENAVLFTVGSRGRDHFRNREYHIQGEYLGISERPNFFNAKEVTAIVMEGFKNGEYDEVYIAYTKFVSTITQHAQMMKLLPLSAEELITSGKVKTTEETKEEKSKMSDRELTIMTYEPEPEELLKYLIPNFVSSTVYGSMIESAASEQGARRTAMESATTNANEMIDGLTLQYNRVRQAAITQEISEIVGGAEALN.

This sequence belongs to the ATPase gamma chain family. F-type ATPases have 2 components, CF(1) - the catalytic core - and CF(0) - the membrane proton channel. CF(1) has five subunits: alpha(3), beta(3), gamma(1), delta(1), epsilon(1). CF(0) has three main subunits: a, b and c.

Its subcellular location is the cell membrane. With respect to regulation, inhibited by nitrate. In terms of biological role, produces ATP from ADP in the presence of a proton gradient across the membrane. The gamma chain is believed to be important in regulating ATPase activity and the flow of protons through the CF(0) complex. The polypeptide is ATP synthase gamma chain, sodium ion specific (atpG) (Acetobacterium woodii (strain ATCC 29683 / DSM 1030 / JCM 2381 / KCTC 1655 / WB1)).